The sequence spans 694 residues: Polyribonucleotide nucleotidyltransferase (694 aa).

Mg(2+) contacts are provided by Asp485 and Asp491. In terms of domain architecture, KH spans 552-611 (PRIETMQIKPNKIATVIGPGGKQIRQIIEEAGVQIDINDSGLVSISASSPQAIEKAKSII). One can recognise an S1 motif domain in the interval 621 to 689 (GKIYEGRVTS…EKGQYKLSHK (69 aa)).

It belongs to the polyribonucleotide nucleotidyltransferase family. The cofactor is Mg(2+).

The protein localises to the cytoplasm. The enzyme catalyses RNA(n+1) + phosphate = RNA(n) + a ribonucleoside 5'-diphosphate. In terms of biological role, involved in mRNA degradation. Catalyzes the phosphorolysis of single-stranded polyribonucleotides processively in the 3'- to 5'-direction. The sequence is that of Polyribonucleotide nucleotidyltransferase from Chlamydia felis (strain Fe/C-56) (Chlamydophila felis).